Reading from the N-terminus, the 319-residue chain is Aspartate carbamoyltransferase catalytic subunit (319 aa).

Carbamoyl phosphate-binding residues include arginine 59 and threonine 60. Lysine 87 contributes to the L-aspartate binding site. The carbamoyl phosphate site is built by arginine 109, histidine 137, and glutamine 140. Residues arginine 170 and arginine 224 each coordinate L-aspartate. Residues glycine 265 and proline 266 each contribute to the carbamoyl phosphate site.

The protein belongs to the aspartate/ornithine carbamoyltransferase superfamily. ATCase family. As to quaternary structure, heterododecamer (2C3:3R2) of six catalytic PyrB chains organized as two trimers (C3), and six regulatory PyrI chains organized as three dimers (R2).

It catalyses the reaction carbamoyl phosphate + L-aspartate = N-carbamoyl-L-aspartate + phosphate + H(+). It participates in pyrimidine metabolism; UMP biosynthesis via de novo pathway; (S)-dihydroorotate from bicarbonate: step 2/3. In terms of biological role, catalyzes the condensation of carbamoyl phosphate and aspartate to form carbamoyl aspartate and inorganic phosphate, the committed step in the de novo pyrimidine nucleotide biosynthesis pathway. The sequence is that of Aspartate carbamoyltransferase catalytic subunit from Gemmatimonas aurantiaca (strain DSM 14586 / JCM 11422 / NBRC 100505 / T-27).